The sequence spans 275 residues: Subtilisin (275 aa).

A Ca(2+)-binding site is contributed by Q2. Positions 5-274 (PYGISQIKAP…KGLINVQAAA (270 aa)) constitute a Peptidase S8 domain. The active-site Charge relay system is D32. D41 serves as a coordination point for Ca(2+). H64 acts as the Charge relay system in catalysis. Residues L75, N77, I79, V81, A169, Y171, and T174 each coordinate Ca(2+). Residue S221 is the Charge relay system of the active site.

The protein belongs to the peptidase S8 family. Ca(2+) serves as cofactor.

The protein resides in the secreted. The enzyme catalyses Hydrolysis of proteins with broad specificity for peptide bonds, and a preference for a large uncharged residue in P1. Hydrolyzes peptide amides.. Its function is as follows. Subtilisin is an extracellular alkaline serine protease, it catalyzes the hydrolysis of proteins and peptide amides. This Bacillus pumilus (Bacillus mesentericus) protein is Subtilisin (apr).